Consider the following 544-residue polypeptide: Methionine--tRNA ligase (544 aa).

The 'HIGH' region signature appears at 10–20 (PYANGSLHLGH). Residues cysteine 141, cysteine 144, cysteine 153, and cysteine 156 each contribute to the Zn(2+) site. The short motif at 329-333 (KLSTS) is the 'KMSKS' region element. Threonine 332 provides a ligand contact to ATP.

This sequence belongs to the class-I aminoacyl-tRNA synthetase family. MetG type 1 subfamily. Monomer. The cofactor is Zn(2+).

The protein localises to the cytoplasm. The catalysed reaction is tRNA(Met) + L-methionine + ATP = L-methionyl-tRNA(Met) + AMP + diphosphate. Is required not only for elongation of protein synthesis but also for the initiation of all mRNA translation through initiator tRNA(fMet) aminoacylation. This chain is Methionine--tRNA ligase, found in Bacillus cereus (strain 03BB102).